Consider the following 130-residue polypeptide: Small ribosomal subunit protein uS11c (130 aa).

This sequence belongs to the universal ribosomal protein uS11 family. In terms of assembly, part of the 30S ribosomal subunit.

The protein resides in the plastid. The protein localises to the chloroplast. The chain is Small ribosomal subunit protein uS11c from Psilotum nudum (Whisk fern).